The following is a 320-amino-acid chain: Nodulation efficiency protein NfeD (320 aa).

Belongs to the ornithine cyclodeaminase/mu-crystallin family.

In terms of biological role, seems to be involved in the nodulation efficiency of R.meliloti GR4 on alfalfa roots. The protein is Nodulation efficiency protein NfeD of Rhizobium meliloti (Ensifer meliloti).